The primary structure comprises 195 residues: MARCKS-related protein (195 aa).

Positions 1–195 are disordered; the sequence is MGSQSSKAPR…PTPASAEQNE (195 aa). G2 is lipidated: N-myristoyl glycine. A Phosphothreonine modification is found at T14. Low complexity predominate over residues 16 to 26; that stretch reads EEAAGASPAKA. Phosphoserine is present on residues S22, S36, S41, and S48. Positions 53-64 are enriched in low complexity; that stretch reads GTDEAAGATGDA. S71 carries the post-translational modification Phosphoserine. Positions 76–85 are enriched in basic and acidic residues; sequence AKGEVPPKET. A Phosphothreonine modification is found at T85. The span at 86–98 shows a compositional bias: basic residues; sequence PKKKKKFSFKKPF. The tract at residues 87 to 110 is effector domain involved in lipid-binding and calmodulin-binding; sequence KKKKKFSFKKPFKLSGLSFKRNRK. S93, S101, S104, S119, S120, and S135 each carry phosphoserine. T148 is modified (phosphothreonine). A phosphoserine mark is found at S151, S162, and S165. Over residues 153 to 195 the composition is skewed to low complexity; that stretch reads EPQAKGAEASAASEEEAGPQATEPSTPSGPESGPTPASAEQNE. Phosphothreonine is present on residues T178 and T187.

This sequence belongs to the MARCKS family. In terms of assembly, binds to filamentous actin (F-actin), but not to monomeric G-actin, independently of its phosphorylation status. In terms of processing, phosphorylated. Phosphorylation at Ser-120 and Thr-178 is non-redundantly catalyzed by MAPK8 in vivo. Phosphorylation at Thr-148 is preferentially catalyzed by MAPK8 in vivo, but this modification can also be catalyzed by other kinases in the absence of MAPK8. May be phosphorylated by protein kinase C, which disrupts the interaction with calmodulin.

It localises to the cytoplasm. The protein localises to the cytoskeleton. It is found in the cell membrane. Functionally, controls cell movement by regulating actin cytoskeleton homeostasis and filopodium and lamellipodium formation. When unphosphorylated, induces cell migration. When phosphorylated by MAPK8, induces actin bundles formation and stabilization, thereby reducing actin plasticity, hence restricting cell movement, including neuronal migration. May be involved in coupling the protein kinase C and calmodulin signal transduction systems. This Homo sapiens (Human) protein is MARCKS-related protein (MARCKSL1).